The sequence spans 441 residues: Enolase (441 aa).

Residue Gln164 coordinates (2R)-2-phosphoglycerate. Glu206 acts as the Proton donor in catalysis. Mg(2+) contacts are provided by Asp243, Glu289, and Asp316. Lys341, Arg370, Ser371, and Lys392 together coordinate (2R)-2-phosphoglycerate. Residue Lys341 is the Proton acceptor of the active site.

It belongs to the enolase family. It depends on Mg(2+) as a cofactor.

The protein resides in the cytoplasm. The protein localises to the secreted. It is found in the cell surface. The enzyme catalyses (2R)-2-phosphoglycerate = phosphoenolpyruvate + H2O. It participates in carbohydrate degradation; glycolysis; pyruvate from D-glyceraldehyde 3-phosphate: step 4/5. In terms of biological role, catalyzes the reversible conversion of 2-phosphoglycerate (2-PG) into phosphoenolpyruvate (PEP). It is essential for the degradation of carbohydrates via glycolysis. This is Enolase from Leuconostoc mesenteroides subsp. mesenteroides (strain ATCC 8293 / DSM 20343 / BCRC 11652 / CCM 1803 / JCM 6124 / NCDO 523 / NBRC 100496 / NCIMB 8023 / NCTC 12954 / NRRL B-1118 / 37Y).